A 318-amino-acid polypeptide reads, in one-letter code: Ubiquitin-like domain-containing CTD phosphatase 1 (318 aa).

Ala-2 carries the N-acetylalanine modification. Residues 3 to 81 (LPIIVKWGGQ…IMMMGTREES (79 aa)) form the Ubiquitin-like domain. Lys-117 carries the post-translational modification N6-acetyllysine. The region spanning 133–294 (PREGKKLLVL…LKLTQYLKEI (162 aa)) is the FCP1 homology domain. The Mg(2+) site is built by Asp-143, Asp-145, and Asp-253.

Mg(2+) serves as cofactor.

It is found in the nucleus. It carries out the reaction O-phospho-L-seryl-[protein] + H2O = L-seryl-[protein] + phosphate. The enzyme catalyses O-phospho-L-threonyl-[protein] + H2O = L-threonyl-[protein] + phosphate. Its function is as follows. Dephosphorylates 26S nuclear proteasomes, thereby decreasing their proteolytic activity. Recruited to the 19S regulatory particle of the 26S proteasome through its interaction with 19S component PSMD2/RPN1. Once recruited, dephosphorylates 19S component PSMC2/RPT1 which impairs PSMC2 ATPase activity and disrupts 26S proteasome assembly. Has also been reported to stimulate the proteolytic activity of the 26S proteasome. This is Ubiquitin-like domain-containing CTD phosphatase 1 (UBLCP1) from Bos taurus (Bovine).